The sequence spans 254 residues: O-antigen biosynthesis glycosyltransferase WbnJ (254 aa).

It belongs to the glycosyltransferase 2 family.

The enzyme catalyses an N-acetyl-alpha-D-galactosaminyl derivative + UDP-alpha-D-galactose = a beta-D-galactosyl-(1-&gt;3)-N-acetyl-alpha-D-galactosaminyl derivative + UDP + H(+). It catalyses the reaction alpha-D-GalNAc-(1-&gt;3)-alpha-D-GalNAc-di-trans,octa-cis-undecaprenyl diphosphate + UDP-alpha-D-galactose = beta-D-Gal-(1-&gt;3)-alpha-D-GalNAc-(1-&gt;3)-alpha-D-GalNAc-di-trans,octa-cis-undecaprenyl diphosphate + UDP + H(+). The protein operates within bacterial outer membrane biogenesis; LPS O-antigen biosynthesis. In terms of biological role, involved in the assembly of the O-repeating unit during O-antigen biosynthesis. This is O-antigen biosynthesis glycosyltransferase WbnJ from Escherichia coli.